The following is a 307-amino-acid chain: Putative gluconeogenesis factor (307 aa).

Belongs to the gluconeogenesis factor family.

It localises to the cytoplasm. Required for morphogenesis under gluconeogenic growth conditions. This chain is Putative gluconeogenesis factor, found in Yersinia pestis.